A 594-amino-acid chain; its full sequence is Protein HOTHEAD (594 aa).

Positions 1–19 are cleaved as a signal peptide; the sequence is MALKLFLFALLLCLPTSLS. 64–91 lines the FAD pocket; sequence DYIVIGGGTAGCPLAATLSQNFSVLVLE. Histidine 529 serves as the catalytic Proton acceptor.

It belongs to the GMC oxidoreductase family. Requires FAD as cofactor. Expressed in roots, leaves, stems, inflorescences and siliques. Found not only in epidermis but also in all sub-epidermal cell layers.

In terms of biological role, probable FAD-dependent enzyme. Involved in regulating post-genital organ fusion. Required to limit cellular interactions between contacting epidermal cells during floral development. In Arabidopsis thaliana (Mouse-ear cress), this protein is Protein HOTHEAD (HTH).